A 79-amino-acid polypeptide reads, in one-letter code: ATP synthase subunit c (79 aa).

2 consecutive transmembrane segments (helical) span residues 11–31 (MAAAIMMGLAAIGAAIGIGIL) and 53–73 (FFIVMGLVDAIPMIAVGLGLY).

The protein belongs to the ATPase C chain family. F-type ATPases have 2 components, F(1) - the catalytic core - and F(0) - the membrane proton channel. F(1) has five subunits: alpha(3), beta(3), gamma(1), delta(1), epsilon(1). F(0) has three main subunits: a(1), b(2) and c(10-14). The alpha and beta chains form an alternating ring which encloses part of the gamma chain. F(1) is attached to F(0) by a central stalk formed by the gamma and epsilon chains, while a peripheral stalk is formed by the delta and b chains.

It localises to the cell inner membrane. In terms of biological role, f(1)F(0) ATP synthase produces ATP from ADP in the presence of a proton or sodium gradient. F-type ATPases consist of two structural domains, F(1) containing the extramembraneous catalytic core and F(0) containing the membrane proton channel, linked together by a central stalk and a peripheral stalk. During catalysis, ATP synthesis in the catalytic domain of F(1) is coupled via a rotary mechanism of the central stalk subunits to proton translocation. Functionally, key component of the F(0) channel; it plays a direct role in translocation across the membrane. A homomeric c-ring of between 10-14 subunits forms the central stalk rotor element with the F(1) delta and epsilon subunits. This is ATP synthase subunit c from Proteus mirabilis (strain HI4320).